Consider the following 1898-residue polypeptide: Receptor-type tyrosine-protein phosphatase F (1898 aa).

The N-terminal stretch at 1-29 (MTPEPAPGRTMVPLVPALVMLGLVAGAHG) is a signal peptide. Topologically, residues 30–1254 (DSKPVFVKVP…QQQEEPELLW (1225 aa)) are extracellular. 3 consecutive Ig-like C2-type domains span residues 33–123 (PVFV…AKLS), 135–224 (PSID…ANLY), and 232–314 (PRFS…AQVT). Residues Cys-54 and Cys-107 are joined by a disulfide bond. 68–77 (KKGKKVSSQR) is a binding site for heparin. N-linked (GlcNAc...) asparagine glycosylation is present at Asn-117. Cys-156 and Cys-207 are oxidised to a cystine. 2 N-linked (GlcNAc...) asparagine glycosylation sites follow: Asn-250 and Asn-295. Cysteines 253 and 298 form a disulfide. Fibronectin type-III domains are found at residues 321 to 411 (PPID…TGEQ), 416 to 510 (PPRR…TQQG), 514 to 604 (QPAD…TAQS), 609 to 706 (PPQK…TDED), 711 to 810 (PPRK…TTGA), 811 to 905 (VPGR…PEDV), 909 to 1001 (FPQN…TMPV), and 1005 to 1089 (FAKN…TAPD). Positions 399–418 (PPSEAVRARTGEQAPSSPPR) are disordered. Positions 693 to 713 (GPESSPVLVRTDEDVPSGPPR) are disordered. N-linked (GlcNAc...) asparagine glycosylation occurs at Asn-721. Asn-941 and Asn-957 each carry an N-linked (GlcNAc...) asparagine glycan. The chain crosses the membrane as a helical span at residues 1255–1275 (VTGPVLAVILIVLIVIAILLF). Over 1276-1898 (KRKRTHSPSS…YLGSFDHYAT (623 aa)) the chain is Cytoplasmic. The residue at position 1296 (Ser-1296) is a Phosphoserine. Tyrosine-protein phosphatase domains lie at 1343 to 1598 (FSQE…LLEA) and 1630 to 1889 (MELE…ALEY). Substrate contacts are provided by residues Asp-1507, 1539 to 1545 (CSAGVGR), and Gln-1583. The active-site Phosphocysteine intermediate is Cys-1539. The active-site Phosphocysteine intermediate is the Cys-1830.

It belongs to the protein-tyrosine phosphatase family. Receptor class 2A subfamily. Interacts with GRIP1. Interacts with PPFIA1, PPFIA2 and PPFIA3. Interacts with INSR.

The protein localises to the membrane. It catalyses the reaction O-phospho-L-tyrosyl-[protein] + H2O = L-tyrosyl-[protein] + phosphate. Functionally, possible cell adhesion receptor. It possesses an intrinsic protein tyrosine phosphatase activity (PTPase) and dephosphorylates EPHA2 regulating its activity. In terms of biological role, the first PTPase domain has enzymatic activity, while the second one seems to affect the substrate specificity of the first one. This Bos taurus (Bovine) protein is Receptor-type tyrosine-protein phosphatase F (PTPRF).